The following is a 736-amino-acid chain: Replication restart protein PriA (736 aa).

Positions 230–396 (DFKGNISKEN…KEGRIRTFNF (167 aa)) constitute a Helicase ATP-binding domain. An ATP-binding site is contributed by 243–250 (GPTGSGKT). The DEAH box motif lies at 339–342 (DEEH). The Zn(2+) site is built by C452, C455, C461, C464, C479, C482, C492, and C495. A Helicase C-terminal domain is found at 487–643 (GLVESCPRCG…EELERRKALG (157 aa)).

This sequence belongs to the helicase family. PriA subfamily. Component of the replication restart primosome. Requires Zn(2+) as cofactor.

It carries out the reaction Couples ATP hydrolysis with the unwinding of duplex DNA by translocating in the 3'-5' direction.. It catalyses the reaction ATP + H2O = ADP + phosphate + H(+). Its function is as follows. Initiates the restart of stalled replication forks, which reloads the replicative helicase on sites other than the origin of replication. Recognizes and binds to abandoned replication forks and remodels them to uncover a helicase loading site. Promotes assembly of the primosome at these replication forks. The protein is Replication restart protein PriA of Thermotoga maritima (strain ATCC 43589 / DSM 3109 / JCM 10099 / NBRC 100826 / MSB8).